A 259-amino-acid chain; its full sequence is Kynurenine formamidase (259 aa).

Residues 34 to 38 (HGGAW) carry the HGGXW motif. Ser103 serves as the catalytic Nucleophile. Residues Asp196 and His228 contribute to the active site.

It belongs to the kynurenine formamidase family. As to quaternary structure, homodimer.

The catalysed reaction is N-formyl-L-kynurenine + H2O = L-kynurenine + formate + H(+). The protein operates within amino-acid degradation; L-tryptophan degradation via kynurenine pathway; L-kynurenine from L-tryptophan: step 2/2. In terms of biological role, catalyzes the hydrolysis of N-formyl-L-kynurenine to L-kynurenine, the second step in the kynurenine pathway of tryptophan degradation. Kynurenine may be further oxidized to nicotinic acid, NAD(H) and NADP(H). Required for elimination of toxic metabolites. The chain is Kynurenine formamidase from Meyerozyma guilliermondii (strain ATCC 6260 / CBS 566 / DSM 6381 / JCM 1539 / NBRC 10279 / NRRL Y-324) (Yeast).